Consider the following 117-residue polypeptide: MSKQPRKQRKALYNAPAHARGKHMSATLSKDLRADIGKRSLPIRKGDKVQVLRGDFKGHEGAVLGVDYGSYKITIEEVTLSKPDGTAVFLPVDPSNVMIIDADMDDDRRIKNVTGDN.

The segment covering 1–10 (MSKQPRKQRK) has biased composition (basic residues). Residues 1–28 (MSKQPRKQRKALYNAPAHARGKHMSATL) are disordered.

Belongs to the universal ribosomal protein uL24 family. Part of the 50S ribosomal subunit.

Its function is as follows. One of two assembly initiator proteins, it binds directly to the 5'-end of the 23S rRNA, where it nucleates assembly of the 50S subunit. Functionally, located at the polypeptide exit tunnel on the outside of the subunit. This Methanobrevibacter smithii (strain ATCC 35061 / DSM 861 / OCM 144 / PS) protein is Large ribosomal subunit protein uL24.